A 639-amino-acid chain; its full sequence is MADYSTVPPPSSGSAGGGGGGGVNDAFKDALQRARQIAAKIGGDAGTSLNSNDYGYGGQKRPLEDGDQPDAKKVPPQNDSFGAQLPPMHQQQRSVMTEEYKVPDGMVGFIIGRGGEQISRIQQESGCKIQIAPDSGGLPERSCMLTGTPESVQSAKRLLDQIVEKGRPAPGFHHGDGPGNAVQEIMIPASKAGLVIGKGGETIKQLQERAGVKMVMIQDGPQNTGADKPLRITGDPYKVQQAKEMVLELIRDQGGFREVRNEYGSRIGGNEGIDVPIPRFAVGIVIGRNGEMIKKIQNDAGVRIQFKPDDGTTPDRIAQITGPPDRCQHAAEIITDLLRSVQAGNPGGPGPGGRGRGRGQGNWNMGPPGGLQEFNFIVPTGKTGLIIGKGGETIKSISQQSGARIELQRNPPPNADPNMKLFTIRGTPQQIDYARQLIEEKIGGPVNPLGPPVPHGPHGVPGPHGPPGPPGPGTPMGPYNPAPYNPGPPGPAPHGPPAPYAPQGWGNAYPHWQQQAPPDPAKAGTDPNSAAWAAYYAHYYQQQAQPPPAAPAGAPTTTQTNGQGDQQNPAPAGQVDYTKAWEEYYKKMGQAVPAPAGAPPGGQPDYSAAWAEYYRQQAAYYAQTSPQGMPQHPPAPQGQ.

2 disordered regions span residues 1 to 27 (MADY…NDAF) and 40 to 88 (KIGG…LPPM). Residue Ala-2 is modified to N-acetylalanine. The span at 14 to 23 (SAGGGGGGGV) shows a compositional bias: gly residues. Phosphoserine is present on residues Ser-48 and Ser-51. A compositionally biased stretch (basic and acidic residues) spans 61–73 (RPLEDGDQPDAKK). KH domains lie at 95 to 159 (VMTE…KRLL), 180 to 246 (NAVQ…KEMV), and 270 to 334 (NEGI…AEII). Position 135 is a phosphoserine (Ser-135). The residue at position 148 (Thr-148) is a Phosphothreonine. Omega-N-methylarginine is present on residues Arg-316, Arg-354, Arg-356, and Arg-358. A disordered region spans residues 341–360 (VQAGNPGGPGPGGRGRGRGQ). The segment covering 345-360 (NPGGPGPGGRGRGRGQ) has biased composition (gly residues). Positions 371–438 (LQEFNFIVPT…QQIDYARQLI (68 aa)) constitute a KH 4 domain. Position 427 is a phosphothreonine (Thr-427). 2 disordered regions span residues 442–527 (IGGP…GTDP) and 543–574 (QAQP…PAGQ). Residues 463-500 (PHGPPGPPGPGTPMGPYNPAPYNPGPPGPAPHGPPAPY) show a composition bias toward pro residues. Residues 551–568 (PAGAPTTTQTNGQGDQQN) show a composition bias toward low complexity. Residue Ser-625 is modified to Phosphoserine.

As to quaternary structure, found in a complex with PUF60 and far upstream element (FUSE) DNA segment. Interacts with PUF60 and JTV1. In terms of processing, ubiquitinated. This targets the protein for proteasome-mediated degradation.

The protein localises to the nucleus. Regulates MYC expression by binding to a single-stranded far-upstream element (FUSE) upstream of the MYC promoter. May act both as activator and repressor of transcription. In Rattus norvegicus (Rat), this protein is Far upstream element-binding protein 1.